We begin with the raw amino-acid sequence, 80 residues long: MYNVVVCLLTLSFLLLTGLSNTAEARVPYEAREGVWDQKVITEIKAEVGGSCSPHAHGRGPPNRPGSSNIPGSPKRCTKP.

The first 25 residues, 1–25, serve as a signal peptide directing secretion; that stretch reads MYNVVVCLLTLSFLLLTGLSNTAEA. An SCOOP motif motif is present at residues 45-59; that stretch reads KAEVGGSCSPHAHGR. The segment at 50 to 80 is disordered; sequence GSCSPHAHGRGPPNRPGSSNIPGSPKRCTKP. Residues 51–53 carry the SxS motif essential for MIK2 binding motif; that stretch reads SCS.

This sequence belongs to the serine rich endogenous peptide (SCOOP) phytocytokine family. In terms of assembly, interacts with MIK2 (via extracellular leucine-rich repeat domain); this interaction triggers the formation of complex between MIK2 and the BAK1/SERK3 and SERK4 coreceptors, and subsequent BAK1 activation by phosphorylation.

The protein localises to the cell membrane. It is found in the secreted. The protein resides in the extracellular space. Its subcellular location is the apoplast. Brassicaceae-specific phytocytokine (plant endogenous peptide released into the apoplast) perceived by MIK2 in a BAK1/SERK3 and SERK4 coreceptors-dependent manner, that modulates various physiological and antimicrobial processes including growth prevention and reactive oxygen species (ROS) response regulation. The sequence is that of Serine rich endogenous peptide 18 from Arabidopsis thaliana (Mouse-ear cress).